Reading from the N-terminus, the 598-residue chain is Kinetochore-associated protein KNL-2 homolog (598 aa).

Residues 19–111 (VVLRDWWLIK…IFGFPPCWER (93 aa)) enclose the SANTA domain. Composition is skewed to basic and acidic residues over residues 335-344 (AKSSKPEKKG) and 371-381 (KSAENKRKIDA). 4 disordered regions span residues 335-403 (AKSS…NNAK), 445-500 (KESL…EEAE), 520-542 (PEKKVKQQKTNAASTDSLGQKRS), and 572-598 (KDGSETNSAPSKGKGSDSRKRRNLKIK). The span at 383–392 (KLQSPTSNVA) shows a compositional bias: polar residues. Polar residues predominate over residues 527–539 (QKTNAASTDSLGQ). The segment at 538–572 (GQKRSRSGRVLVSSLEFWRNQIPVYDMDRNLIQVK) is required for localization at centromeres.

Belongs to the KNL2 family. Expressed in shoot apical meristem, leaf primordia, basal parts of emerging leaves, inflorescence meristems, young inflorescences, developing flower buds, developing sepals and pistils, styles and young siliques.

It localises to the nucleus. Its subcellular location is the nucleoplasm. It is found in the nuclear body. The protein resides in the nucleolus. The protein localises to the chromosome. It localises to the centromere. In terms of biological role, involved in recognition of centromeres and centromeric localization of the centromere-specific histone CENH3. Required for normal progression of mitosis and meiosis. May play a role in the determination of the epigenetic status of centromeres. Binds DNA and RNA in vitro. The protein is Kinetochore-associated protein KNL-2 homolog of Arabidopsis thaliana (Mouse-ear cress).